The primary structure comprises 130 residues: Large ribosomal subunit protein bL19 (130 aa).

This sequence belongs to the bacterial ribosomal protein bL19 family.

This protein is located at the 30S-50S ribosomal subunit interface and may play a role in the structure and function of the aminoacyl-tRNA binding site. The chain is Large ribosomal subunit protein bL19 from Burkholderia lata (strain ATCC 17760 / DSM 23089 / LMG 22485 / NCIMB 9086 / R18194 / 383).